A 128-amino-acid chain; its full sequence is uncharacterized protein (128 aa).

The chain crosses the membrane as a helical span at residues 8 to 28; that stretch reads YQAIYLIFAGFTVFGLLLHFY.

The protein localises to the membrane. This is an uncharacterized protein from Haemophilus influenzae (strain ATCC 51907 / DSM 11121 / KW20 / Rd).